A 403-amino-acid chain; its full sequence is F-box protein At1g60400 (403 aa).

Residues Ile-13–Glu-59 form the F-box domain.

This Arabidopsis thaliana (Mouse-ear cress) protein is F-box protein At1g60400.